Consider the following 574-residue polypeptide: Arginine--tRNA ligase (574 aa).

The 'HIGH' region motif lies at 121–131; the sequence is PNIAKEMHIGH.

This sequence belongs to the class-I aminoacyl-tRNA synthetase family. In terms of assembly, monomer.

The protein localises to the cytoplasm. It catalyses the reaction tRNA(Arg) + L-arginine + ATP = L-arginyl-tRNA(Arg) + AMP + diphosphate. The polypeptide is Arginine--tRNA ligase (Buchnera aphidicola subsp. Acyrthosiphon pisum (strain Tuc7)).